The sequence spans 685 residues: MKTKRFDAALILILLAAAFLNTYHIWQDDTANQYYLAAVKSMTQSFHNFFYASFDPSGFVTVDKPPVVLWIQTIFALIFGVHTWSVIIPQALAGVGSVFLLYRMVKPTFGVGAARIAALVMALTPIAVAVSRTNNIDSMLVFTLLLGSTCLLRAVKQGKLVWLLTAFALIGLAFNMKMMQAFMVLPAFVLFYLIASRVSLKKKIGSLLLSLVLLTGLSLSWAIAVDSASSSSRPYVGSSQTNSVLELAFGYNGTERLFGQTTGLAKGDMNAAGGGNMQNQDNMQAPNGNGSSFSQNGNQSFGNHSQAPQPPNGQTGALNGGGGTPPTGGNGPGNGGPGGGGGKSVNMFGTGDPGPLRLFQSALSGQISWMLPFSLIGLLGAIISWYRDRRGHAAKMKETLFWAAWLVPVAGFFSIAGFFHQYYLIMLAPPIAALSGIGWYTMHRLYKNNKDWSSYLLPAAVLITAVFQVYILSAYTSQIGSVWMYVLGLLGLGITLALLMLKRSHPFSKLLTIISLCVLLLTPVYWSATPLLYGGNSVLPESGPQLKGSANGGNMFSSEVDSGLLSYLRKHNTGEEYLFATLTTVTAAPYIIYENESVMAMGGFNGTDPILTVSELKKLIKEGKVKYFLLSENNSGNSELVSWIKKNGKEITSDEYSGSSSSTNSVQGMRRGPGGESQQTLYLVE.

6 helical membrane-spanning segments follow: residues 6 to 26 (FDAA…YHIW), 68 to 88 (VLWI…SVII), 109 to 129 (FGVG…IAVA), 154 to 174 (AVKQ…GLAF), 176 to 196 (MKMM…LIAS), and 204 to 224 (IGSL…WAIA). The disordered stretch occupies residues 269 to 347 (MNAAGGGNMQ…GGGGGKSVNM (79 aa)). Polar residues predominate over residues 277–286 (MQNQDNMQAP). The span at 287-303 (NGNGSSFSQNGNQSFGN) shows a compositional bias: low complexity. Gly residues predominate over residues 318 to 343 (LNGGGGTPPTGGNGPGNGGPGGGGGK). A run of 7 helical transmembrane segments spans residues 363–383 (LSGQ…GAII), 399–419 (TLFW…AGFF), 422–442 (YYLI…WYTM), 455–475 (YLLP…LSAY), 479–499 (IGSV…LALL), 513–533 (IISL…PLLY), and 573–593 (TGEE…YIIY). The interval 652–685 (TSDEYSGSSSSTNSVQGMRRGPGGESQQTLYLVE) is disordered. Over residues 654 to 665 (DEYSGSSSSTNS) the composition is skewed to low complexity. Polar residues predominate over residues 676–685 (ESQQTLYLVE).

Belongs to the glycosyltransferase 39 family.

It localises to the cell membrane. The chain is Putative mannosyltransferase YycA (yycA) from Bacillus subtilis (strain 168).